Consider the following 97-residue polypeptide: Aspartyl/glutamyl-tRNA(Asn/Gln) amidotransferase subunit C (97 aa).

It belongs to the GatC family. Heterotrimer of A, B and C subunits.

It carries out the reaction L-glutamyl-tRNA(Gln) + L-glutamine + ATP + H2O = L-glutaminyl-tRNA(Gln) + L-glutamate + ADP + phosphate + H(+). The catalysed reaction is L-aspartyl-tRNA(Asn) + L-glutamine + ATP + H2O = L-asparaginyl-tRNA(Asn) + L-glutamate + ADP + phosphate + 2 H(+). In terms of biological role, allows the formation of correctly charged Asn-tRNA(Asn) or Gln-tRNA(Gln) through the transamidation of misacylated Asp-tRNA(Asn) or Glu-tRNA(Gln) in organisms which lack either or both of asparaginyl-tRNA or glutaminyl-tRNA synthetases. The reaction takes place in the presence of glutamine and ATP through an activated phospho-Asp-tRNA(Asn) or phospho-Glu-tRNA(Gln). The polypeptide is Aspartyl/glutamyl-tRNA(Asn/Gln) amidotransferase subunit C (Prochlorococcus marinus subsp. pastoris (strain CCMP1986 / NIES-2087 / MED4)).